We begin with the raw amino-acid sequence, 368 residues long: Ferredoxin--NADP reductase 2 (368 aa).

Positions 57, 65, 70, 110, 145, 310, and 351 each coordinate FAD.

The protein belongs to the ferredoxin--NADP reductase type 2 family. Homodimer. It depends on FAD as a cofactor.

It carries out the reaction 2 reduced [2Fe-2S]-[ferredoxin] + NADP(+) + H(+) = 2 oxidized [2Fe-2S]-[ferredoxin] + NADPH. This chain is Ferredoxin--NADP reductase 2, found in Cupriavidus pinatubonensis (strain JMP 134 / LMG 1197) (Cupriavidus necator (strain JMP 134)).